Reading from the N-terminus, the 957-residue chain is Histone-lysine N-methyltransferase, H3 lysine-9 specific SUVH3 (957 aa).

Positions 73–243 (GHPPGVALGD…PQVCKFLMHG (171 aa)) constitute a YDG domain. A disordered region spans residues 182-209 (EAGGGEGGGGGEGGGGAKKGKGGKGGGK). Residues 183–198 (AGGGEGGGGGEGGGGA) show a composition bias toward gly residues. One can recognise a Pre-SET domain in the interval 319–441 (DVSGGQEAVP…HECGDGCSAK (123 aa)). The SET domain maps to 455 to 920 (LPLEVFMTES…QLEELSYNYG (466 aa)). 3 disordered regions span residues 552-595 (DAAR…GGAE), 611-647 (AAGTAPGAGDNMDGVEGPAAQRSGGEEAAAGPGSSGA), and 783-805 (PPALPSTSDVGNGGTTGSGGGGG). The segment covering 560–578 (QQPQQQQPQQQQQQPAAGG) has biased composition (low complexity). The segment covering 793 to 805 (GNGGTTGSGGGGG) has biased composition (gly residues). The 17-residue stretch at 941-957 (FVMQCNCGAVGCIGNLM) folds into the Post-SET domain.

This sequence belongs to the class V-like SAM-binding methyltransferase superfamily. Histone-lysine methyltransferase family. Suvar3-9 subfamily.

The protein localises to the nucleus. Its subcellular location is the chromosome. It carries out the reaction L-lysyl(9)-[histone H3] + S-adenosyl-L-methionine = N(6)-methyl-L-lysyl(9)-[histone H3] + S-adenosyl-L-homocysteine + H(+). Functionally, histone methyltransferase. Monomethylates specifically 'Lys-9' of histone H3. H3 'Lys-9Me1' (H3K9me1) functions as an epigenetic mark of repressed chromatin. In Chlamydomonas reinhardtii (Chlamydomonas smithii), this protein is Histone-lysine N-methyltransferase, H3 lysine-9 specific SUVH3 (SUVH3).